The sequence spans 503 residues: Lysine--tRNA ligase (503 aa).

Mg(2+)-binding residues include E412 and E419.

This sequence belongs to the class-II aminoacyl-tRNA synthetase family. Homodimer. Requires Mg(2+) as cofactor.

The protein localises to the cytoplasm. The catalysed reaction is tRNA(Lys) + L-lysine + ATP = L-lysyl-tRNA(Lys) + AMP + diphosphate. This Buchnera aphidicola subsp. Schizaphis graminum (strain Sg) protein is Lysine--tRNA ligase.